A 247-amino-acid chain; its full sequence is Bidirectional sugar transporter SWEET1 (247 aa).

Over 1 to 6 the chain is Extracellular; the sequence is MNIAHT. A helical membrane pass occupies residues 7-27; that stretch reads IFGVFGNATALFLFLAPSITF. The MtN3/slv 1 domain maps to 7–94; sequence IFGVFGNATA…LIFLFYAPKK (88 aa). Topologically, residues 28-41 are cytoplasmic; that stretch reads KRIIKNKSTEQFSG. The helical transmembrane segment at 42 to 62 threads the bilayer; it reads IPYPMTLLNCLLSAWYGLPFV. The Extracellular portion of the chain corresponds to 63-71; that stretch reads SKDNTLVST. A helical transmembrane segment spans residues 72 to 92; it reads INGTGAVIETVYVLIFLFYAP. The Cytoplasmic portion of the chain corresponds to 93 to 98; sequence KKEKIK. Residues 99–119 traverse the membrane as a helical segment; the sequence is IFGIFSCVLAVFATVALVSLF. The Extracellular segment spans residues 120–127; it reads ALQGNGRK. The chain crosses the membrane as a helical span at residues 128-148; sequence LFCGLAATVFSIIMYASPLSI. Residues 130 to 213 enclose the MtN3/slv 2 domain; the sequence is CGLAATVFSI…ILYFIYCGNK (84 aa). Residues 149–162 lie on the Cytoplasmic side of the membrane; that stretch reads MRLVVKTKSVEFMP. The helical transmembrane segment at 163-183 threads the bilayer; the sequence is FFLSLFVFLCGTSWFVYGLIG. Over 184–187 the chain is Extracellular; it reads RDPF. Residues 188-208 form a helical membrane-spanning segment; that stretch reads VAIPNGFGCALGTLQLILYFI. The Cytoplasmic segment spans residues 209–247; the sequence is YCGNKGEKSADAQKDEKSVEMKDDEKKQNVVNGKQDLQV. A compositionally biased stretch (basic and acidic residues) spans 221–236; it reads QKDEKSVEMKDDEKKQ. The segment at 221–247 is disordered; that stretch reads QKDEKSVEMKDDEKKQNVVNGKQDLQV. Polar residues predominate over residues 237-247; sequence NVVNGKQDLQV.

Belongs to the SWEET sugar transporter family. As to quaternary structure, forms homooligomers and heterooligomers with SWEET9, SWEET11, SWEET13, SWEET15, SWEET16 and SWEET17. As to expression, mainly expressed in flowers.

Its subcellular location is the cell membrane. The protein localises to the endoplasmic reticulum membrane. In terms of biological role, mediates both low-affinity uptake and efflux of sugar across the plasma membrane. Can transport glucose, and, to a lower extent, mannose, fructose and galactose. The sequence is that of Bidirectional sugar transporter SWEET1 from Arabidopsis thaliana (Mouse-ear cress).